The following is a 205-amino-acid chain: MDIMKDKIRQALSELDILATEVQIDQWLDYLKLLEKWNKVYNMTAIKNIDEMLVKHLFDSLAVAKYIKGDSTVDVGTGGGLPGVVLAILYPQHQFTLVDSVGKKIMFLKNVKKSLSLNNINPLNTRIENLEGNFDNIISRAFSSVDTFYELCKHFLTEHNQMLAMKGRDLEERNLESLPLNIEKYSIKVPFLNAERNLIVIRKKL.

S-adenosyl-L-methionine contacts are provided by residues glycine 76, leucine 81, isoleucine 127 to glutamate 128, and arginine 140.

This sequence belongs to the methyltransferase superfamily. RNA methyltransferase RsmG family.

It is found in the cytoplasm. It carries out the reaction guanosine(527) in 16S rRNA + S-adenosyl-L-methionine = N(7)-methylguanosine(527) in 16S rRNA + S-adenosyl-L-homocysteine. Functionally, specifically methylates the N7 position of guanine in position 527 of 16S rRNA. The chain is Ribosomal RNA small subunit methyltransferase G from Francisella tularensis subsp. tularensis (strain FSC 198).